The following is a 368-amino-acid chain: Glutamate 5-kinase (368 aa).

ATP is bound at residue lysine 15. Serine 55, aspartate 143, and asparagine 155 together coordinate substrate. ATP is bound by residues 175–176 and 217–223; these read SD and SGGMVSK. Residues 277–354 enclose the PUA domain; the sequence is EGRLTIDAGA…DAQEAALGYA (78 aa).

The protein belongs to the glutamate 5-kinase family.

The protein resides in the cytoplasm. The catalysed reaction is L-glutamate + ATP = L-glutamyl 5-phosphate + ADP. The protein operates within amino-acid biosynthesis; L-proline biosynthesis; L-glutamate 5-semialdehyde from L-glutamate: step 1/2. Its function is as follows. Catalyzes the transfer of a phosphate group to glutamate to form L-glutamate 5-phosphate. The chain is Glutamate 5-kinase from Sphingopyxis alaskensis (strain DSM 13593 / LMG 18877 / RB2256) (Sphingomonas alaskensis).